The following is a 202-amino-acid chain: Superoxide dismutase [Mn] (202 aa).

Mn(2+) is bound by residues histidine 27, histidine 82, aspartate 164, and histidine 168.

It belongs to the iron/manganese superoxide dismutase family. Homodimer. It depends on Mn(2+) as a cofactor.

The enzyme catalyses 2 superoxide + 2 H(+) = H2O2 + O2. Functionally, destroys superoxide anion radicals which are normally produced within the cells and which are toxic to biological systems. The chain is Superoxide dismutase [Mn] (sodA) from Listeria ivanovii.